A 169-amino-acid chain; its full sequence is MERAIFAGGCFWCMVQPFEEQAGILSVRSGYTGGHLPNPSYEQVCAKTTGHTEAVEIIFDPEEISYKELVELYWVQTDPTDAFGQFEDRGDNYRPVIYYTTERQKEIAEQSKANLQASGRFDQPIVTTIEPAEPFYLAEDYHQGFYKKNPRRYAQSSAIRHQFLEENWS.

Cys-10 is a catalytic residue.

The protein belongs to the MsrA Met sulfoxide reductase family.

It carries out the reaction L-methionyl-[protein] + [thioredoxin]-disulfide + H2O = L-methionyl-(S)-S-oxide-[protein] + [thioredoxin]-dithiol. The enzyme catalyses [thioredoxin]-disulfide + L-methionine + H2O = L-methionine (S)-S-oxide + [thioredoxin]-dithiol. In terms of biological role, has an important function as a repair enzyme for proteins that have been inactivated by oxidation. Catalyzes the reversible oxidation-reduction of methionine sulfoxide in proteins to methionine. The sequence is that of Peptide methionine sulfoxide reductase MsrA from Streptococcus pyogenes serotype M28 (strain MGAS6180).